The primary structure comprises 220 residues: MRLVIARCSVDYVGRLTAHLPSAVRLVLVKADGSVSIHADGRAYKPLNWMSPPCVIAEESGVWRVTNKAAEQLVITLEEILHDSSHELGVDPGLRKDGVEAHLQVLLADRPDAIAPGLTLIRREYETGIGPVDLLCRDSDGSTVAVEIKRKGEIDGVEQLTRYLVRLDADPALPHPVRGILAAQSITPQARLLAADRGLGCAVVDYDELRGLEPSIPTLF.

This sequence belongs to the NucS endonuclease family.

The protein resides in the cytoplasm. Cleaves both 3' and 5' ssDNA extremities of branched DNA structures. This is Endonuclease NucS from Frankia alni (strain DSM 45986 / CECT 9034 / ACN14a).